The chain runs to 264 residues: Mitochondrial distribution and morphology protein 12 (264 aa).

The SMP-LTD domain occupies 1-232 (MSFDINWNKI…WPSWINLDFN (232 aa)). A disordered region spans residues 240–264 (ESSSSAEESLPHRDDAQDFSADARA). A compositionally biased stretch (basic and acidic residues) spans 248–264 (SLPHRDDAQDFSADARA).

This sequence belongs to the MDM12 family. In terms of assembly, component of the ER-mitochondria encounter structure (ERMES) or MDM complex, composed of MMM1, MDM10, MDM12 and MDM34. An MMM1 homodimer associates with one molecule of MDM12 on each side in a pairwise head-to-tail manner, and the SMP-LTD domains of MMM1 and MDM12 generate a continuous hydrophobic tunnel for phospholipid trafficking.

Its subcellular location is the mitochondrion outer membrane. The protein localises to the endoplasmic reticulum membrane. In terms of biological role, component of the ERMES/MDM complex, which serves as a molecular tether to connect the endoplasmic reticulum (ER) and mitochondria. Components of this complex are involved in the control of mitochondrial shape and protein biogenesis, and function in nonvesicular lipid trafficking between the ER and mitochondria. MDM12 is required for the interaction of the ER-resident membrane protein MMM1 and the outer mitochondrial membrane-resident beta-barrel protein MDM10. The MDM12-MMM1 subcomplex functions in the major beta-barrel assembly pathway that is responsible for biogenesis of all mitochondrial outer membrane beta-barrel proteins, and acts in a late step after the SAM complex. The MDM10-MDM12-MMM1 subcomplex further acts in the TOM40-specific pathway after the action of the MDM12-MMM1 complex. Essential for establishing and maintaining the structure of mitochondria and maintenance of mtDNA nucleoids. The chain is Mitochondrial distribution and morphology protein 12 from Eremothecium gossypii (strain ATCC 10895 / CBS 109.51 / FGSC 9923 / NRRL Y-1056) (Yeast).